The chain runs to 308 residues: HTH-type transcriptional activator AllS (308 aa).

One can recognise an HTH lysR-type domain in the interval 2–59 (FDPETLRTFIAVAETGSFSKAAERLCKTTATISYRIKLLEENTGVALFFRTTRSVTLT). A DNA-binding region (H-T-H motif) is located at residues 19–38 (FSKAAERLCKTTATISYRIK).

Belongs to the LysR transcriptional regulatory family.

Positive regulator essential for the expression of AllD operon. Binds to the AllD promoter. In Escherichia coli O157:H7, this protein is HTH-type transcriptional activator AllS (allS).